The sequence spans 470 residues: ADAM DEC1 (470 aa).

A signal peptide spans 1–30; the sequence is MLRGISQLPAVATMSWVLLPVLWLIVQTQA. The propeptide occupies 31 to 205; it reads IAIKQTPELT…QGPIRISRSL (175 aa). Residue asparagine 61 is glycosylated (N-linked (GlcNAc...) asparagine). The tract at residues 173-200 is disordered; sequence FTSNQEEQDPANHTCGVKSTDGKQGPIR. A glycan (N-linked (GlcNAc...) (complex) asparagine) is linked at asparagine 184. The 195-residue stretch at 218–412 folds into the Peptidase M12B domain; it reads KYIDLYLVLD…QKPKCLLQAP (195 aa). Asparagine 237 carries an N-linked (GlcNAc...) asparagine glycan. Disulfide bonds link cysteine 328-cysteine 407 and cysteine 369-cysteine 374. A Zn(2+)-binding site is contributed by histidine 352. The active site involves glutamate 353. The Zn(2+) site is built by histidine 356 and aspartate 362. The 51-residue stretch at 420–470 folds into the Disintegrin domain; sequence TPVCGNHLLEVGEDCDCGSPKECTNLCCEALTCKLKPGTDCGGDAPNHTTE. Asparagine 466 carries N-linked (GlcNAc...) asparagine glycosylation.

It depends on Zn(2+) as a cofactor. As to expression, expressed highly in the small intestine and appendix, moderately in lymph node, mucosal lining of the colon, thymus, spleen and very weakly in the bone marrow. Predominantly expressed in dendritic cells (DC) of the germinal center. Weakly expressed in monocyte and highly expressed in macrophage. Absent in immature DC.

It is found in the secreted. May play an important role in the control of the immune response and during pregnancy. The sequence is that of ADAM DEC1 (ADAMDEC1) from Homo sapiens (Human).